The sequence spans 389 residues: 8-amino-7-oxononanoate synthase (389 aa).

Arginine 23 is a substrate binding site. Residue 114–115 coordinates pyridoxal 5'-phosphate; sequence GY. Position 139 (histidine 139) interacts with substrate. The pyridoxal 5'-phosphate site is built by serine 185, histidine 213, and threonine 242. Position 245 is an N6-(pyridoxal phosphate)lysine (lysine 245). Threonine 357 provides a ligand contact to substrate.

It belongs to the class-II pyridoxal-phosphate-dependent aminotransferase family. BioF subfamily. As to quaternary structure, homodimer. Pyridoxal 5'-phosphate is required as a cofactor.

It carries out the reaction 6-carboxyhexanoyl-[ACP] + L-alanine + H(+) = (8S)-8-amino-7-oxononanoate + holo-[ACP] + CO2. It participates in cofactor biosynthesis; biotin biosynthesis. Its function is as follows. Catalyzes the decarboxylative condensation of pimeloyl-[acyl-carrier protein] and L-alanine to produce 8-amino-7-oxononanoate (AON), [acyl-carrier protein], and carbon dioxide. The protein is 8-amino-7-oxononanoate synthase of Acidithiobacillus ferrooxidans (strain ATCC 23270 / DSM 14882 / CIP 104768 / NCIMB 8455) (Ferrobacillus ferrooxidans (strain ATCC 23270)).